A 429-amino-acid polypeptide reads, in one-letter code: Cholesterol 7-desaturase nvd (429 aa).

The helical transmembrane segment at 23 to 43 (FVICLWTLAVTFIRIYWIFFV) threads the bilayer. The Rieske domain maps to 98–201 (YGILKSSQLK…SQEVDGFIFI (104 aa)). [2Fe-2S] cluster is bound by residues Cys138, His140, Cys158, and His161.

It belongs to the cholesterol 7-desaturase family. [2Fe-2S] cluster serves as cofactor. In terms of tissue distribution, expressed predominantly in the prothoracic gland and weakly in brain and malpighian tubules.

The protein localises to the membrane. The catalysed reaction is cholesterol + NADPH + O2 + H(+) = 7-dehydrocholesterol + NADP(+) + 2 H2O. It carries out the reaction cholesterol + NADH + O2 + H(+) = 7-dehydrocholesterol + NAD(+) + 2 H2O. It participates in steroid hormone biosynthesis; dafachronic acid biosynthesis. Functionally, catalyzes the production of 7-dehydrocholesterol (7-DHC or cholesta-5,7-dien-3beta-ol) by inserting a double bond (desaturating) at the C7-C8 single bond of cholesterol. Essential regulator of steroid biosynthesis, as this reaction is the first step in the synthesis of the steroid hormone Delta(7)-dafachronic acid. Required for insect molting, metamorphosis and body growth throughout development via the regulation of ecdysteroid biosynthesis in the prothoracic gland. In Drosophila melanogaster (Fruit fly), this protein is Cholesterol 7-desaturase nvd.